The chain runs to 100 residues: Aspartyl/glutamyl-tRNA(Asn/Gln) amidotransferase subunit C (100 aa).

The protein belongs to the GatC family. Heterotrimer of A, B and C subunits.

It catalyses the reaction L-glutamyl-tRNA(Gln) + L-glutamine + ATP + H2O = L-glutaminyl-tRNA(Gln) + L-glutamate + ADP + phosphate + H(+). The catalysed reaction is L-aspartyl-tRNA(Asn) + L-glutamine + ATP + H2O = L-asparaginyl-tRNA(Asn) + L-glutamate + ADP + phosphate + 2 H(+). Allows the formation of correctly charged Asn-tRNA(Asn) or Gln-tRNA(Gln) through the transamidation of misacylated Asp-tRNA(Asn) or Glu-tRNA(Gln) in organisms which lack either or both of asparaginyl-tRNA or glutaminyl-tRNA synthetases. The reaction takes place in the presence of glutamine and ATP through an activated phospho-Asp-tRNA(Asn) or phospho-Glu-tRNA(Gln). The protein is Aspartyl/glutamyl-tRNA(Asn/Gln) amidotransferase subunit C of Staphylococcus carnosus (strain TM300).